The sequence spans 165 residues: Thiol peroxidase (165 aa).

Residues 17–165 (PQVGEIVENF…NYEAALAVLA (149 aa)) enclose the Thioredoxin domain. Residue cysteine 59 is the Cysteine sulfenic acid (-SOH) intermediate of the active site. The cysteines at positions 59 and 93 are disulfide-linked.

It belongs to the peroxiredoxin family. Tpx subfamily. In terms of assembly, homodimer.

It carries out the reaction a hydroperoxide + [thioredoxin]-dithiol = an alcohol + [thioredoxin]-disulfide + H2O. Functionally, thiol-specific peroxidase that catalyzes the reduction of hydrogen peroxide and organic hydroperoxides to water and alcohols, respectively. Plays a role in cell protection against oxidative stress by detoxifying peroxides. This Haemophilus influenzae (strain ATCC 51907 / DSM 11121 / KW20 / Rd) protein is Thiol peroxidase.